Consider the following 309-residue polypeptide: Protein FdhE (309 aa).

Belongs to the FdhE family.

Its subcellular location is the cytoplasm. Functionally, necessary for formate dehydrogenase activity. The polypeptide is Protein FdhE (Escherichia coli (strain K12 / MC4100 / BW2952)).